Reading from the N-terminus, the 218-residue chain is N-(5'-phosphoribosyl)anthranilate isomerase (218 aa).

It belongs to the TrpF family.

The catalysed reaction is N-(5-phospho-beta-D-ribosyl)anthranilate = 1-(2-carboxyphenylamino)-1-deoxy-D-ribulose 5-phosphate. It participates in amino-acid biosynthesis; L-tryptophan biosynthesis; L-tryptophan from chorismate: step 3/5. The chain is N-(5'-phosphoribosyl)anthranilate isomerase from Rhodopseudomonas palustris (strain BisB18).